Consider the following 380-residue polypeptide: Chorismate synthase (380 aa).

NADP(+) is bound by residues R40 and R46. Residues 128-130 (RSS), 247-248 (QA), G292, 307-311 (KPIPT), and R333 each bind FMN.

This sequence belongs to the chorismate synthase family. Homotetramer. FMNH2 is required as a cofactor.

It catalyses the reaction 5-O-(1-carboxyvinyl)-3-phosphoshikimate = chorismate + phosphate. It functions in the pathway metabolic intermediate biosynthesis; chorismate biosynthesis; chorismate from D-erythrose 4-phosphate and phosphoenolpyruvate: step 7/7. Functionally, catalyzes the anti-1,4-elimination of the C-3 phosphate and the C-6 proR hydrogen from 5-enolpyruvylshikimate-3-phosphate (EPSP) to yield chorismate, which is the branch point compound that serves as the starting substrate for the three terminal pathways of aromatic amino acid biosynthesis. This reaction introduces a second double bond into the aromatic ring system. In Alkaliphilus metalliredigens (strain QYMF), this protein is Chorismate synthase.